The primary structure comprises 414 residues: NAC domain-containing protein 35 (414 aa).

A compositionally biased stretch (polar residues) spans 1–21 (MAIVSSTTSIIPMSNQVNNNE). Residues 1-47 (MAIVSSTTSIIPMSNQVNNNEKGIEDNDHRGGQESHVQNEDEADDHD) form a disordered region. Residues 22 to 47 (KGIEDNDHRGGQESHVQNEDEADDHD) show a composition bias toward basic and acidic residues. The 148-residue stretch at 51-198 (VMPGFRFHPT…EISLCRVYKR (148 aa)) folds into the NAC domain. The DNA-binding element occupies 149–204 (IGLKKTLVFYSGKAPKGTRTSWIMNEYRLPHHETEKYQKAEISLCRVYKRPGVEDH). The tract at residues 200 to 251 (GVEDHPSVPRSLSTRHHNHNSSTSSRLALRQQQHHSSSSNHSDNNLNNNNNI) is disordered. The segment covering 233 to 251 (HHSSSSNHSDNNLNNNNNI) has biased composition (low complexity).

In terms of tissue distribution, expressed in aerial organs in early stages of seedling development.

It is found in the nucleus. Functionally, transcription factor that acts as a floral repressor. Controls flowering time by negatively regulating CONSTANS (CO) expression in a GIGANTEA (GI)-independent manner. Regulates the plant cold response by positive regulation of the cold response genes COR15A and KIN1. May coordinate cold response and flowering time. The chain is NAC domain-containing protein 35 from Arabidopsis thaliana (Mouse-ear cress).